The sequence spans 387 residues: Phosphoglycerate kinase (387 aa).

Substrate is bound by residues 21-23 (DLN), R36, 59-62 (HLGR), R113, and R146. Residues K197, E314, and 340 to 343 (GGDT) each bind ATP.

This sequence belongs to the phosphoglycerate kinase family. In terms of assembly, monomer.

It localises to the cytoplasm. It carries out the reaction (2R)-3-phosphoglycerate + ATP = (2R)-3-phospho-glyceroyl phosphate + ADP. It participates in carbohydrate degradation; glycolysis; pyruvate from D-glyceraldehyde 3-phosphate: step 2/5. The polypeptide is Phosphoglycerate kinase (Pseudomonas fluorescens (strain ATCC BAA-477 / NRRL B-23932 / Pf-5)).